Consider the following 165-residue polypeptide: 3-isopropylmalate dehydratase small subunit (165 aa).

This sequence belongs to the LeuD family. LeuD type 2 subfamily. Heterodimer of LeuC and LeuD.

The catalysed reaction is (2R,3S)-3-isopropylmalate = (2S)-2-isopropylmalate. It participates in amino-acid biosynthesis; L-leucine biosynthesis; L-leucine from 3-methyl-2-oxobutanoate: step 2/4. In terms of biological role, catalyzes the isomerization between 2-isopropylmalate and 3-isopropylmalate, via the formation of 2-isopropylmaleate. This Halothermothrix orenii (strain H 168 / OCM 544 / DSM 9562) protein is 3-isopropylmalate dehydratase small subunit.